The chain runs to 206 residues: MARYIGPKCKLARREGTDLFLKSGVRAIESKCNIEAAPGIHGQRRGRQSDYGTQLREKQKVRRIYGVLERQFSGYYKEAAGKKGATGENLLQLLECRLDNVVYRMGFGSTRAESRQLVSHKSISVNGQTVNVPSYQVRAGDVVAVREKAKNQLRIVQALDLCAQRGRVEWVEVDTEKKSGVFKNVPARSDLSADINESLIVELYSK.

The S4 RNA-binding domain maps to 96–156; sequence CRLDNVVYRM…EKAKNQLRIV (61 aa).

The protein belongs to the universal ribosomal protein uS4 family. Part of the 30S ribosomal subunit. Contacts protein S5. The interaction surface between S4 and S5 is involved in control of translational fidelity.

One of the primary rRNA binding proteins, it binds directly to 16S rRNA where it nucleates assembly of the body of the 30S subunit. Its function is as follows. With S5 and S12 plays an important role in translational accuracy. This is Small ribosomal subunit protein uS4 from Pseudomonas fluorescens (strain SBW25).